The primary structure comprises 111 residues: UPF0145 protein RBAM_010660 (111 aa).

Belongs to the UPF0145 family.

The polypeptide is UPF0145 protein RBAM_010660 (Bacillus velezensis (strain DSM 23117 / BGSC 10A6 / LMG 26770 / FZB42) (Bacillus amyloliquefaciens subsp. plantarum)).